We begin with the raw amino-acid sequence, 521 residues long: Lysine--tRNA ligase (521 aa).

The 'HIGH' region motif lies at 32-40 (PSGTVHIGN). The short motif at 280-284 (KISSS) is the 'KMSKS' region element.

Belongs to the class-I aminoacyl-tRNA synthetase family.

The protein localises to the cytoplasm. It catalyses the reaction tRNA(Lys) + L-lysine + ATP = L-lysyl-tRNA(Lys) + AMP + diphosphate. This is Lysine--tRNA ligase (lysS) from Borreliella burgdorferi (strain ATCC 35210 / DSM 4680 / CIP 102532 / B31) (Borrelia burgdorferi).